The sequence spans 353 residues: UPF0283 membrane protein YpsIP31758_1791 (353 aa).

The next 3 membrane-spanning stretches (helical) occupy residues 71–91 (MVTA…VQWV), 101–121 (IALG…GSVV), and 214–234 (ESAL…FIAW).

It belongs to the UPF0283 family.

Its subcellular location is the cell inner membrane. The polypeptide is UPF0283 membrane protein YpsIP31758_1791 (Yersinia pseudotuberculosis serotype O:1b (strain IP 31758)).